Here is a 205-residue protein sequence, read N- to C-terminus: Small ribosomal subunit protein uS4 (205 aa).

The region spanning 94–157 is the S4 RNA-binding domain; it reads SRLDAVVYRA…RNLALVLEAL (64 aa).

This sequence belongs to the universal ribosomal protein uS4 family. In terms of assembly, part of the 30S ribosomal subunit. Contacts protein S5. The interaction surface between S4 and S5 is involved in control of translational fidelity.

In terms of biological role, one of the primary rRNA binding proteins, it binds directly to 16S rRNA where it nucleates assembly of the body of the 30S subunit. Functionally, with S5 and S12 plays an important role in translational accuracy. This chain is Small ribosomal subunit protein uS4, found in Hyphomonas neptunium (strain ATCC 15444).